A 268-amino-acid chain; its full sequence is Putative hydro-lyase ACICU_01268 (268 aa).

It belongs to the D-glutamate cyclase family.

The sequence is that of Putative hydro-lyase ACICU_01268 from Acinetobacter baumannii (strain ACICU).